Consider the following 123-residue polypeptide: ATP synthase epsilon chain (123 aa).

This sequence belongs to the ATPase epsilon chain family. As to quaternary structure, F-type ATPases have 2 components, CF(1) - the catalytic core - and CF(0) - the membrane proton channel. CF(1) has five subunits: alpha(3), beta(3), gamma(1), delta(1), epsilon(1). CF(0) has three main subunits: a, b and c.

It is found in the cell membrane. Functionally, produces ATP from ADP in the presence of a proton gradient across the membrane. The chain is ATP synthase epsilon chain from Corynebacterium diphtheriae (strain ATCC 700971 / NCTC 13129 / Biotype gravis).